The chain runs to 203 residues: ATP-dependent Clp protease proteolytic subunit 2 (203 aa).

S97 acts as the Nucleophile in catalysis. Residue H122 is part of the active site.

This sequence belongs to the peptidase S14 family. In terms of assembly, fourteen ClpP subunits assemble into 2 heptameric rings which stack back to back to give a disk-like structure with a central cavity, resembling the structure of eukaryotic proteasomes.

It localises to the cytoplasm. It catalyses the reaction Hydrolysis of proteins to small peptides in the presence of ATP and magnesium. alpha-casein is the usual test substrate. In the absence of ATP, only oligopeptides shorter than five residues are hydrolyzed (such as succinyl-Leu-Tyr-|-NHMec, and Leu-Tyr-Leu-|-Tyr-Trp, in which cleavage of the -Tyr-|-Leu- and -Tyr-|-Trp bonds also occurs).. Its function is as follows. Cleaves peptides in various proteins in a process that requires ATP hydrolysis. Has a chymotrypsin-like activity. Plays a major role in the degradation of misfolded proteins. The polypeptide is ATP-dependent Clp protease proteolytic subunit 2 (Myxococcus xanthus (strain DK1622)).